A 366-amino-acid chain; its full sequence is Ribosomal RNA large subunit methyltransferase M (366 aa).

S-adenosyl-L-methionine-binding positions include S188, 221-224 (CPGG), D240, D260, and D277. Residue K306 is the Proton acceptor of the active site.

The protein belongs to the class I-like SAM-binding methyltransferase superfamily. RNA methyltransferase RlmE family. RlmM subfamily. In terms of assembly, monomer.

The protein resides in the cytoplasm. The catalysed reaction is cytidine(2498) in 23S rRNA + S-adenosyl-L-methionine = 2'-O-methylcytidine(2498) in 23S rRNA + S-adenosyl-L-homocysteine + H(+). Functionally, catalyzes the 2'-O-methylation at nucleotide C2498 in 23S rRNA. This is Ribosomal RNA large subunit methyltransferase M from Shigella dysenteriae serotype 1 (strain Sd197).